A 323-amino-acid polypeptide reads, in one-letter code: Elongation factor P--(R)-beta-lysine ligase (323 aa).

74–76 (SPE) lines the substrate pocket. ATP contacts are provided by residues 98-100 (RNE) and N107. Y116 is a binding site for substrate. ATP is bound at residue 242–243 (EL). E249 is a binding site for substrate. ATP is bound at residue G298.

The protein belongs to the class-II aminoacyl-tRNA synthetase family. EpmA subfamily. As to quaternary structure, homodimer.

It carries out the reaction D-beta-lysine + L-lysyl-[protein] + ATP = N(6)-((3R)-3,6-diaminohexanoyl)-L-lysyl-[protein] + AMP + diphosphate + H(+). Functionally, with EpmB is involved in the beta-lysylation step of the post-translational modification of translation elongation factor P (EF-P). Catalyzes the ATP-dependent activation of (R)-beta-lysine produced by EpmB, forming a lysyl-adenylate, from which the beta-lysyl moiety is then transferred to the epsilon-amino group of a conserved specific lysine residue in EF-P. This Photobacterium profundum (strain SS9) protein is Elongation factor P--(R)-beta-lysine ligase.